The following is a 758-amino-acid chain: Inhibitor of nuclear factor kappa-B kinase subunit alpha (758 aa).

The 287-residue stretch at 15–301 (WVMKERLGTG…LNTDSKQPQC (287 aa)) folds into the Protein kinase domain. ATP is bound by residues 21–29 (LGTGGFGHV) and K44. Catalysis depends on D145, which acts as the Proton acceptor. Positions 456–477 (LLRFNTNLTRYKNMMFSFSQQL) are leucine-zipper. Positions 741–746 (QDWSWT) are NEMO-binding.

This sequence belongs to the protein kinase superfamily. Ser/Thr protein kinase family. I-kappa-B kinase subfamily. As to quaternary structure, directly interacts with ikbkg/nemo.

It is found in the cytoplasm. It localises to the nucleus. The catalysed reaction is L-seryl-[I-kappa-B protein] + ATP = O-phospho-L-seryl-[I-kappa-B protein] + ADP + H(+). Its activity is regulated as follows. Activated when phosphorylated and inactivated when dephosphorylated. Functionally, phosphorylates inhibitors of NF-kappa-B thus leading to the dissociation of the inhibitor/NF-kappa-B complex and ultimately the degradation of the inhibitor. Phosphorylates 'Ser-10' of histone H3 at NF-kappa-B-regulated promoters during inflammatory responses triggered by cytokines. The polypeptide is Inhibitor of nuclear factor kappa-B kinase subunit alpha (chuk) (Danio rerio (Zebrafish)).